Here is a 664-residue protein sequence, read N- to C-terminus: Acetolactate synthase 2, chloroplastic (664 aa).

Low complexity predominate over residues 1-34 (MAAAAAAPSPSFSKTLSSSSSKSSTLLPRSTFPF). Residues 1 to 51 (MAAAAAAPSPSFSKTLSSSSSKSSTLLPRSTFPFPHHPHKTTPPPLHLTPT) are disordered. A chloroplast-targeting transit peptide spans 1–91 (MAAAAAAPSP…VSRFAPDEPR (91 aa)). Residue E138 coordinates thiamine diphosphate. Residues C158 and C304 are joined by a disulfide bond. Residues R240, 346–367 (HGTV…FGVR), and 389–408 (DIDS…ICAD) each bind FAD. The interval 481–561 (QHQMWAAQYY…VKIMLLNNQH (81 aa)) is thiamine pyrophosphate binding. Mg(2+) contacts are provided by D532 and N559.

The protein belongs to the TPP enzyme family. The cofactor is Mg(2+). Thiamine diphosphate serves as cofactor.

The protein resides in the plastid. The protein localises to the chloroplast. It catalyses the reaction 2 pyruvate + H(+) = (2S)-2-acetolactate + CO2. It participates in amino-acid biosynthesis; L-isoleucine biosynthesis; L-isoleucine from 2-oxobutanoate: step 1/4. The protein operates within amino-acid biosynthesis; L-valine biosynthesis; L-valine from pyruvate: step 1/4. The chain is Acetolactate synthase 2, chloroplastic (ALS SURB) from Nicotiana tabacum (Common tobacco).